The chain runs to 744 residues: MPATRITLDSTFIDQVKHEIKPHWGELGWVTYKRTYARWLPEKNRTENWDETVKRVIEGNINLDPRLQDLPSQDVIDKLTNEAQQLFRLVYSLSATPSGRNLWISGTDYQKRNGDSLNNCWFIAIRPQAYGDSHIVPTYIDKRKEAVSMPFSFLFDQLMKGGGVGFSVVDDNINQIPQVDHQVDLSVVIDKNSKSYDASLKVGAIDKAEWEKNNSGLDNVIYYRIPDTREGWVLANARLIDLHFNDTNPDQKTKLVLDISDIRPYGAKIHGFGGTASGPMPLVEMFFDINNVINERVGQKLTAVDATDICNLIGKTVVAGNVRRSAELALGSSDNQDFIKMKQDKEKLYHHRWASNNSVAINSKFNNYGPIADGIMHNGEPGIVNLDLSRNYGRIADGYQAGIDDDVEGTNPCGEISLANGEPCNLFEVFPYIAEQQGWDLKEAFSLAARYTKRVTFSHYDWEVSRNIIQKNRRIGVSMSGIQDWLLNDLGHRVVTGFKDATDKETGAPIKKPIYDPQGIKMVDGLYHAVIAADKAYSEELGVNPSIKHTTVKPSGTVAKLAGVSEGMHFHYAGYLIQRIRFQASDPLLPALRKCGYHTEPDIYTKNTICVEIPLRAAHADSKNFASAGTVSIAEQFATQAFLQTYWSDNAVSCTVTFQANESNQIAPLLHQYRHTIKSTSLLPYYGGSLKQAPKEPINKKAYEDRVAMITGDVKEVFENQNKDQKGLELVDQSDCTSGACPIK.

Residues Cys120 and Cys424 are joined by a disulfide bond. The segment at 148-159 (SMPFSFLFDQLM) is effector region-1. Residues 169 to 318 (VDDNINQIPQ…ICNLIGKTVV (150 aa)) are effector region-2. Catalysis depends on residues Cys413 and Glu415. The adenosylcobalamin-binding-1 stretch occupies residues 570-631 (FHYAGYLIQR…SKNFASAGTV (62 aa)). Residues 690 to 729 (LKQAPKEPINKKAYEDRVAMITGDVKEVFENQNKDQKGLE) are adenosylcobalamin-binding-2.

It belongs to the class II ribonucleoside-triphosphate reductase family. As to quaternary structure, monomer. Adenosylcob(III)alamin serves as cofactor.

The enzyme catalyses a 2'-deoxyribonucleoside 5'-triphosphate + [thioredoxin]-disulfide + H2O = a ribonucleoside 5'-triphosphate + [thioredoxin]-dithiol. Its activity is regulated as follows. Allosterically regulated by ATP and dNTP. The chain is Adenosylcobalamin-dependent ribonucleoside-triphosphate reductase (rtpR) from Lactobacillus helveticus (strain DPC 4571).